A 147-amino-acid polypeptide reads, in one-letter code: Nudix hydrolase 1 (147 aa).

S2 bears the N-acetylserine mark. Residues I7–P140 form the Nudix hydrolase domain. Positions G41–G62 match the Nudix box motif. 2 residues coordinate Mg(2+): E56 and E60.

Belongs to the Nudix hydrolase family. As to quaternary structure, homodimer. Mg(2+) serves as cofactor. It depends on Mn(2+) as a cofactor. Expressed in roots, stems and leaves.

It localises to the cytoplasm. It catalyses the reaction 7,8-dihydroneopterin 3'-triphosphate + H2O = 7,8-dihydroneopterin 3'-phosphate + diphosphate + H(+). It carries out the reaction NAD(+) + H2O = beta-nicotinamide D-ribonucleotide + AMP + 2 H(+). The catalysed reaction is NADH + H2O = reduced beta-nicotinamide D-ribonucleotide + AMP + 2 H(+). The enzyme catalyses 8-oxo-dGTP + H2O = 8-oxo-dGMP + diphosphate + H(+). Functionally, mediates the hydrolysis of some nucleoside diphosphate derivatives. Its substrate specificity is unclear. In vitro, it can use NTP, dNTP, 8-oxo-GTP, 8-oxo-dGTP, dGTP, dATP, dTTP or dihydroneopterin triphosphate (DHNTP) as substrate. Has some NADH pyrophosphatase activity in vitro; however, such activity may not be relevant in vivo due to the high concentration of manganese used during the experiments. Plays an important role in protection against oxidative DNA and RNA damage by removing oxidatively damaged form of guanine. The polypeptide is Nudix hydrolase 1 (NUDT1) (Arabidopsis thaliana (Mouse-ear cress)).